The primary structure comprises 223 residues: Alpha-S2-casein (223 aa).

A signal peptide spans 1 to 15 (MKLFIFTCLLAVALA). Phosphoserine occurs at positions 23, 24, 25, 28, 46, 71, 72, and 73. 2 repeats span residues 76–128 (FADI…TLGK) and 129–223 (EQIS…ERQA). Phosphoserine is present on residues S132, S147, and S155.

The protein belongs to the alpha-casein family. Mammary gland specific. Secreted in milk.

The protein localises to the secreted. Its function is as follows. Important role in the capacity of milk to transport calcium phosphate. The chain is Alpha-S2-casein (CSN1S2) from Cavia porcellus (Guinea pig).